Here is a 214-residue protein sequence, read N- to C-terminus: tRNA (guanine-N(7)-)-methyltransferase (214 aa).

Positions 44, 69, 96, and 118 each coordinate S-adenosyl-L-methionine. The active site involves Asp-118. Substrate is bound by residues Lys-122, Asp-154, and 191–194 (TEYE).

The protein belongs to the class I-like SAM-binding methyltransferase superfamily. TrmB family.

It catalyses the reaction guanosine(46) in tRNA + S-adenosyl-L-methionine = N(7)-methylguanosine(46) in tRNA + S-adenosyl-L-homocysteine. It participates in tRNA modification; N(7)-methylguanine-tRNA biosynthesis. Its function is as follows. Catalyzes the formation of N(7)-methylguanine at position 46 (m7G46) in tRNA. The polypeptide is tRNA (guanine-N(7)-)-methyltransferase (Listeria monocytogenes serovar 1/2a (strain ATCC BAA-679 / EGD-e)).